We begin with the raw amino-acid sequence, 247 residues long: ATP synthase subunit a, chloroplastic (247 aa).

Transmembrane regions (helical) follow at residues 38–58 (QVLI…ALAV), 95–115 (VPFI…GALL), 134–154 (INTT…AGLA), 199–219 (LVVV…VMFL), and 220–240 (GLFT…AYIG).

It belongs to the ATPase A chain family. In terms of assembly, F-type ATPases have 2 components, CF(1) - the catalytic core - and CF(0) - the membrane proton channel. CF(1) has five subunits: alpha(3), beta(3), gamma(1), delta(1), epsilon(1). CF(0) has four main subunits: a, b, b' and c.

The protein resides in the plastid. The protein localises to the chloroplast thylakoid membrane. Functionally, key component of the proton channel; it plays a direct role in the translocation of protons across the membrane. The protein is ATP synthase subunit a, chloroplastic of Trachelium caeruleum (Blue throatwort).